Here is a 151-residue protein sequence, read N- to C-terminus: MKAVVLTLAVLFLTGSQARHFWQQDDPQSPWDRVKDLVTVYVDAVKDGGREYVAQFEASALGKQLNLKLLDNWDTLGSTITKLREQIGPVTQEFWDNLEKETEVLRQEMSKDLEEVKQKVQPYLDDFQKKWQEEVELYRQKVAPLGTELRE.

Residues Met1–Ala18 form the signal peptide. The propeptide occupies Arg19–Gln24. Repeat copies occupy residues Leu67 to Gly88 and Pro89 to Ser110. Positions Leu67–Ala143 are 4 X approximate tandem repeats. The residue at position 109 (Met109) is a Methionine sulfoxide. Residues Lys111–Gln121 form a 3; half-length repeat. Copy 4 of the repeat occupies Pro122–Ala143.

It belongs to the apolipoprotein A1/A4/E family. As to quaternary structure, homodimer. Interacts with APOA1BP and CLU. Component of a sperm activating protein complex (SPAP), consisting of APOA1, an immunoglobulin heavy chain, an immunoglobulin light chain and albumin. Interacts with NDRG1. Interacts with SCGB3A2. Interacts with NAXE and YJEFN3. Glycosylated. In terms of processing, palmitoylated. Post-translationally, phosphorylation sites are present in the extracellular medium. In terms of tissue distribution, major protein of plasma HDL, also found in chylomicrons.

The protein localises to the secreted. Its function is as follows. Participates in the reverse transport of cholesterol from tissues to the liver for excretion by promoting cholesterol efflux from tissues and by acting as a cofactor for the lecithin cholesterol acyltransferase (LCAT). As part of the SPAP complex, activates spermatozoa motility. The sequence is that of Apolipoprotein A-I (APOA1) from Panthera tigris altaica (Siberian tiger).